We begin with the raw amino-acid sequence, 220 residues long: VQ motif-containing protein 5 (220 aa).

The short motif at 49 to 57 (FKSLVQQLT) is the VQ element. 2 disordered regions span residues 61–80 (PCDR…PEPI) and 131–171 (HMMA…GASS). 2 stretches are compositionally biased toward polar residues: residues 133 to 150 (MAQS…QSNG) and 157 to 171 (SWFN…GASS).

Its subcellular location is the nucleus. Functionally, may function as negative regulator of plant defense. In Arabidopsis thaliana (Mouse-ear cress), this protein is VQ motif-containing protein 5.